The primary structure comprises 472 residues: MKAETPSFEAHQFVRVRRGDAVRRLIQRDKTPLAVLFMAAVVGTLAGLVGVAFEKSVNWVQNQRIGALAQVADHWYLVWPLAFILSALLAMVGYFLVRRFAPEAGGSGIPEIEGALEELRPVRWWRVLPVKFVGGMGTLGAGMVLGREGPMVQLGGNIGRMVLDVFRMRSPEARHTLLATGAASGLSAAFNAPLAGILFIIEEMRPQFRYNLISIKAVFTGVIMSSIVFRIFNGEAAIIEVGKLSNAPVNTLWLYLVLGMLFGCFGPLFNFLVLRTQDLFQRIHGGNIKKWVLIGGLIGGLCGLLGLMQPSAVGGGFNLIPIAAAGNFSVGLLLFIFIARVVTTLICFSSGAPGGIFAPMLALGTLLGTAFGMAAIPLFPAYHLDAGTFAIAGMGALLAASVRAPLTGIVLVLEMTDNYQLILPMIITCLGATLLAQFLGGKPLYSTILQRTLAKQEAEQAAKAQQAPRENT.

The Cytoplasmic portion of the chain corresponds to methionine 1 to proline 32. Residues leucine 33 to alanine 69 form a helical membrane-spanning segment. Residues glutamine 70–tyrosine 76 are Periplasmic-facing. A helical transmembrane segment spans residues leucine 77–phenylalanine 100. The short motif at glycine 106–proline 110 is the Selectivity filter part_1 element. Serine 107 contacts chloride. Residues isoleucine 109–leucine 116 constitute an intramembrane region (helical). At glutamate 117 to arginine 123 the chain is on the cytoplasmic side. A run of 2 helical transmembrane segments spans residues tryptophan 124–alanine 141 and glutamate 148–phenylalanine 166. A Selectivity filter part_2 motif is present at residues glycine 146–proline 150. Over arginine 167–threonine 176 the chain is Cytoplasmic. 2 consecutive intramembrane regions (helical) follow at residues leucine 177–alanine 189 and proline 193–isoleucine 201. At glutamate 202–serine 214 the chain is on the cytoplasmic side. Residues isoleucine 215–phenylalanine 232 form a helical membrane-spanning segment. The Periplasmic portion of the chain corresponds to asparagine 233–leucine 252. Residues tryptophan 253–glutamine 281 form a helical membrane-spanning segment. Residues arginine 282–asparagine 287 lie on the Cytoplasmic side of the membrane. Residues isoleucine 288 to glutamine 309 form a helical membrane-spanning segment. Topologically, residues proline 310–serine 329 are periplasmic. The next 2 membrane-spanning stretches (helical) occupy residues valine 330–serine 349 and glycine 355–isoleucine 376. Positions glycine 355–proline 359 match the Selectivity filter part_3 motif. Residues isoleucine 356 and phenylalanine 357 each contribute to the chloride site. At proline 377–alanine 386 the chain is on the periplasmic side. The segment at residues glycine 387–serine 401 is an intramembrane region (helical). The note=Loop between two helices intramembrane region spans valine 402 to alanine 404. An intramembrane region (helical) is located at residues proline 405–threonine 416. Positions aspartate 417–leucine 421 form an intramembrane region, note=Loop between two helices. Residues isoleucine 422–phenylalanine 438 form a helical membrane-spanning segment. Residues leucine 439–threonine 472 lie on the Cytoplasmic side of the membrane. Tyrosine 445 is a binding site for chloride.

It belongs to the chloride channel (TC 2.A.49) family. ClcA subfamily. As to quaternary structure, homodimer.

It is found in the cell inner membrane. The enzyme catalyses 2 chloride(in) + H(+)(out) = 2 chloride(out) + H(+)(in). In terms of biological role, proton-coupled chloride transporter. Functions as antiport system and exchanges two chloride ions for 1 proton. Probably acts as an electrical shunt for an outwardly-directed proton pump that is linked to amino acid decarboxylation, as part of the extreme acid resistance (XAR) response. In Klebsiella pneumoniae subsp. pneumoniae (strain ATCC 700721 / MGH 78578), this protein is H(+)/Cl(-) exchange transporter ClcA.